Here is a 715-residue protein sequence, read N- to C-terminus: Putative macrophage stimulating 1-like protein (715 aa).

The N-terminal stretch at 1–20 (MAPAPVTLLAPGAASSMSCS) is a signal peptide. A PAN domain is found at 21–110 (QPGQRSPSND…GRCDLFQEKG (90 aa)). Kringle domains lie at 63–156 (GRCG…IKSC), 160–238 (ACVW…LPRC), 252–345 (SCFR…IRRC), and 353–464 (DCYH…LRRC). Cystine bridges form between cysteine 127/cysteine 151, cysteine 161/cysteine 238, cysteine 182/cysteine 221, cysteine 210/cysteine 233, cysteine 253/cysteine 345, cysteine 316/cysteine 339, cysteine 354/cysteine 464, cysteine 375/cysteine 447, cysteine 511/cysteine 527, cysteine 606/cysteine 671, cysteine 636/cysteine 650, and cysteine 661/cysteine 689. The Peptidase S1 domain maps to 488-713 (VAGGHPGNSP…FVDWIHKVMR (226 aa)).

Belongs to the peptidase S1 family. Plasminogen subfamily.

The protein resides in the secreted. This is Putative macrophage stimulating 1-like protein (MST1L) from Homo sapiens (Human).